A 1235-amino-acid chain; its full sequence is Serine/threonine-protein kinase TAO2 (1235 aa).

Ser-9 carries the post-translational modification Phosphoserine. Positions 28–281 constitute a Protein kinase domain; it reads FSDLREIGHG…SEVLLKHRFV (254 aa). Residues 34–42 and Lys-57 each bind ATP; that span reads IGHGSFGAV. Catalysis depends on Asp-151, which acts as the Proton acceptor. Ser-181 bears the Phosphoserine mark. The disordered stretch occupies residues 318-457; that stretch reads QEAPNGPGAE…TSTTSSARRR (140 aa). Low complexity predominate over residues 350 to 374; sequence SSHSVPSMSISASSQSSSVNSLADA. The span at 375–393 shows a compositional bias: acidic residues; the sequence is SDNEEEEEEEEEEEEEEEG. The span at 394-409 shows a compositional bias: basic and acidic residues; that stretch reads PEAREMAMMQEGEHTV. Ser-414 is subject to Phosphoserine. Coiled-coil stretches lie at residues 486–547 and 574–601; these read SALR…RRHQ and KELAALLEAQKRTYKLRKEQLKEELQEN. At Ser-656 the chain carries Phosphoserine. Residues 681 to 713 are a coiled coil; sequence LRQHEATRELELRQLQAVQRTRAELTRLQHQTE. Disordered stretches follow at residues 732 to 777, 804 to 835, and 891 to 939; these read HAAQ…QPCS, KEGATLEPKQQRILGEESGAPSPSPQKHGSLV, and QGPA…RPCP. The span at 766 to 777 shows a compositional bias: polar residues; it reads NTGTPIEQQPCS. A phosphoserine mark is found at Ser-777, Ser-825, and Ser-827. Acidic residues predominate over residues 899–908; it reads PEEEEEEEEG. Positions 924-934 are enriched in pro residues; that stretch reads PDIPPEPPPTH. The next 2 helical transmembrane spans lie at 965-985 and 987-1007; these read LLPLLLLLLLPLLAAQGGGGL and AALLALEVGLVGLGASYLLLC. Phosphoserine occurs at positions 1011 and 1031. 3 helical membrane-spanning segments follow: residues 1012-1032, 1043-1063, and 1166-1186; these read LPSSLFLLLAQGTALGAVLGL, LGLGAAWLLAWPGLALPLVAM, and QGLASHLPPWAIHTLASWGLL. Residues 1198–1235 are disordered; the sequence is LPRSQRQLGPPASRQPLPGTLAGRRSRTRQSRALPPWR.

Belongs to the protein kinase superfamily. STE Ser/Thr protein kinase family. STE20 subfamily. Interacts with MAP2K3 and MAP2K6. Self-associates. Interacts with tubulins through the C-terminal domain. Interacts with MAP3K7 and interferes with MAP3K7-binding to CHUK and thus prevents NF-kappa-B activation. Isoform 2 interacts with PCDH8; this complex may also include CDH2. It depends on Mg(2+) as a cofactor. Isoforms 1 and 2 are autophosphorylated. Post-translationally, C-terminal cleavage of isoform 1 and subsequent nuclear localization requires CASP9 activity. In terms of processing, autophosphorylated. Phosphorylated by ATM. Phosphorylated on Ser-1031 by MAPK14. This phosphorylation is required PCDH8 for endocytosis. In terms of tissue distribution, ubiquitously expressed, with a higher level of expression in testis and brain.

It localises to the cytoplasmic vesicle membrane. It is found in the cytoplasm. The protein resides in the cytoskeleton. Its subcellular location is the nucleus. The protein localises to the cell projection. It localises to the dendrite. The enzyme catalyses L-seryl-[protein] + ATP = O-phospho-L-seryl-[protein] + ADP + H(+). The catalysed reaction is L-threonyl-[protein] + ATP = O-phospho-L-threonyl-[protein] + ADP + H(+). Its activity is regulated as follows. Selectively inhibited by the enantiopure organoruthenium inhibitor 9E1. Activated following arsenic trioxide (As(2)O(3)) treatment. In terms of biological role, serine/threonine-protein kinase involved in different processes such as membrane blebbing and apoptotic bodies formation DNA damage response and MAPK14/p38 MAPK stress-activated MAPK cascade. Phosphorylates itself, MBP, activated MAPK8, MAP2K3, MAP2K6 and tubulins. Activates the MAPK14/p38 MAPK signaling pathway through the specific activation and phosphorylation of the upstream MAP2K3 and MAP2K6 kinases. In response to DNA damage, involved in the G2/M transition DNA damage checkpoint by activating the p38/MAPK14 stress-activated MAPK cascade, probably by mediating phosphorylation of upstream MAP2K3 and MAP2K6 kinases. Isoform 1, but not isoform 2, plays a role in apoptotic morphological changes, including cell contraction, membrane blebbing and apoptotic bodies formation. This function, which requires the activation of MAPK8/JNK and nuclear localization of C-terminally truncated isoform 1, may be linked to the mitochondrial CASP9-associated death pathway. Isoform 1 binds to microtubules and affects their organization and stability independently of its kinase activity. Prevents MAP3K7-mediated activation of CHUK, and thus NF-kappa-B activation, but not that of MAPK8/JNK. May play a role in the osmotic stress-MAPK8 pathway. Isoform 2, but not isoform 1, is required for PCDH8 endocytosis. Following homophilic interactions between PCDH8 extracellular domains, isoform 2 phosphorylates and activates MAPK14/p38 MAPK which in turn phosphorylates isoform 2. This process leads to PCDH8 endocytosis and CDH2 cointernalization. Both isoforms are involved in MAPK14 phosphorylation. This is Serine/threonine-protein kinase TAO2 (TAOK2) from Homo sapiens (Human).